Consider the following 785-residue polypeptide: Phenylalanine--tRNA ligase beta subunit (785 aa).

Positions 38–150 (CEHLKTFVIA…NTYNVGDTFF (113 aa)) constitute a tRNA-binding domain. The B5 domain occupies 394-470 (VDNIELNFFP…RLYGYDKICE (77 aa)). Asp448, Asp454, Glu457, and Glu458 together coordinate Mg(2+). In terms of domain architecture, FDX-ACB spans 690–783 (SCYQSVKRDF…VAEKLGGVLR (94 aa)).

This sequence belongs to the phenylalanyl-tRNA synthetase beta subunit family. Type 1 subfamily. As to quaternary structure, tetramer of two alpha and two beta subunits. Mg(2+) is required as a cofactor.

It localises to the cytoplasm. It catalyses the reaction tRNA(Phe) + L-phenylalanine + ATP = L-phenylalanyl-tRNA(Phe) + AMP + diphosphate + H(+). The sequence is that of Phenylalanine--tRNA ligase beta subunit from Ehrlichia canis (strain Jake).